A 475-amino-acid polypeptide reads, in one-letter code: ATP synthase subunit beta, chloroplastic (475 aa).

155 to 162 (GGAGVGKT) provides a ligand contact to ATP.

Belongs to the ATPase alpha/beta chains family. In terms of assembly, F-type ATPases have 2 components, CF(1) - the catalytic core - and CF(0) - the membrane proton channel. CF(1) has five subunits: alpha(3), beta(3), gamma(1), delta(1), epsilon(1). CF(0) has four main subunits: a(1), b(1), b'(1) and c(9-12).

It is found in the plastid. The protein resides in the chloroplast thylakoid membrane. The catalysed reaction is ATP + H2O + 4 H(+)(in) = ADP + phosphate + 5 H(+)(out). Its function is as follows. Produces ATP from ADP in the presence of a proton gradient across the membrane. The catalytic sites are hosted primarily by the beta subunits. This is ATP synthase subunit beta, chloroplastic from Pyropia yezoensis (Susabi-nori).